The following is a 261-amino-acid chain: Cytochrome c oxidase subunit 3 (261 aa).

Over 1 to 15 the chain is Mitochondrial matrix; the sequence is MAHQAHAYHMVDPSP. The chain crosses the membrane as a helical span at residues 16-34; sequence WPLTGAVAALLMTSGLAVW. Over 35 to 40 the chain is Mitochondrial intermembrane; that stretch reads FHFHSM. The chain crosses the membrane as a helical span at residues 41–66; the sequence is YLLYLGLTLLLLTMVQWWRDIIREGT. The Mitochondrial matrix segment spans residues 67–72; the sequence is FQGHHT. The helical transmembrane segment at 73–105 threads the bilayer; the sequence is PPVQKGLRYGMILFITSEVFFFLGFFWAFYHSS. Over 106–128 the chain is Mitochondrial intermembrane; it reads LAPTPELGGCWPPTGIYPLDPFE. Residues 129 to 152 traverse the membrane as a helical segment; the sequence is VPLLNTAVLLASGVTVTWAHHSLM. At 153 to 155 the chain is on the mitochondrial matrix side; that stretch reads EGN. The helical transmembrane segment at 156-183 threads the bilayer; the sequence is RKEAIQALTLTVLLGFYFTALQAMEYYE. At 184 to 190 the chain is on the mitochondrial intermembrane side; the sequence is APFTIAD. Residues 191-223 form a helical membrane-spanning segment; sequence GVYGSTFFVATGFHGLHVIIGSTFLMVCLLRQI. Topologically, residues 224–232 are mitochondrial matrix; it reads QYHFTSEHH. Residues 233–256 form a helical membrane-spanning segment; it reads FGFERAAWYWHFVDVVWLFLYVSI. The Mitochondrial intermembrane portion of the chain corresponds to 257-261; the sequence is YWWGS.

Belongs to the cytochrome c oxidase subunit 3 family. As to quaternary structure, component of the cytochrome c oxidase (complex IV, CIV), a multisubunit enzyme composed of 14 subunits. The complex is composed of a catalytic core of 3 subunits MT-CO1, MT-CO2 and MT-CO3, encoded in the mitochondrial DNA, and 11 supernumerary subunits COX4I, COX5A, COX5B, COX6A, COX6B, COX6C, COX7A, COX7B, COX7C, COX8 and NDUFA4, which are encoded in the nuclear genome. The complex exists as a monomer or a dimer and forms supercomplexes (SCs) in the inner mitochondrial membrane with NADH-ubiquinone oxidoreductase (complex I, CI) and ubiquinol-cytochrome c oxidoreductase (cytochrome b-c1 complex, complex III, CIII), resulting in different assemblies (supercomplex SCI(1)III(2)IV(1) and megacomplex MCI(2)III(2)IV(2)).

Its subcellular location is the mitochondrion inner membrane. The enzyme catalyses 4 Fe(II)-[cytochrome c] + O2 + 8 H(+)(in) = 4 Fe(III)-[cytochrome c] + 2 H2O + 4 H(+)(out). In terms of biological role, component of the cytochrome c oxidase, the last enzyme in the mitochondrial electron transport chain which drives oxidative phosphorylation. The respiratory chain contains 3 multisubunit complexes succinate dehydrogenase (complex II, CII), ubiquinol-cytochrome c oxidoreductase (cytochrome b-c1 complex, complex III, CIII) and cytochrome c oxidase (complex IV, CIV), that cooperate to transfer electrons derived from NADH and succinate to molecular oxygen, creating an electrochemical gradient over the inner membrane that drives transmembrane transport and the ATP synthase. Cytochrome c oxidase is the component of the respiratory chain that catalyzes the reduction of oxygen to water. Electrons originating from reduced cytochrome c in the intermembrane space (IMS) are transferred via the dinuclear copper A center (CU(A)) of subunit 2 and heme A of subunit 1 to the active site in subunit 1, a binuclear center (BNC) formed by heme A3 and copper B (CU(B)). The BNC reduces molecular oxygen to 2 water molecules using 4 electrons from cytochrome c in the IMS and 4 protons from the mitochondrial matrix. The chain is Cytochrome c oxidase subunit 3 (MT-CO3) from Squalus acanthias (Spiny dogfish).